We begin with the raw amino-acid sequence, 388 residues long: Mannitol-1-phosphate 5-dehydrogenase (388 aa).

NAD(+) is bound at residue 5 to 16; the sequence is AVHFGGGNIGRG. Lys-213 is a catalytic residue.

This sequence belongs to the mannitol dehydrogenase family. As to quaternary structure, monomer.

The enzyme catalyses D-mannitol 1-phosphate + NAD(+) = beta-D-fructose 6-phosphate + NADH + H(+). Functionally, catalyzes the NAD(H)-dependent interconversion of D-fructose 6-phosphate and D-mannitol 1-phosphate in the mannitol metabolic pathway. This Ajellomyces capsulatus (strain NAm1 / WU24) (Darling's disease fungus) protein is Mannitol-1-phosphate 5-dehydrogenase.